The following is a 1221-amino-acid chain: WEB family protein At4g27595, chloroplastic (1221 aa).

The disordered stretch occupies residues 1-68 (MASRTKTGLM…VSDRRTARVP (68 aa)). A chloroplast-targeting transit peptide spans 1-82 (MASRTKTGLM…ANYFLIIICM (82 aa)). A compositionally biased stretch (polar residues) spans 32–58 (SDGNSPSPVQSTRLSIDRSPQTVNSKP). 3 coiled-coil regions span residues 95–149 (TGLL…AAQH), 202–543 (TEEL…FNSK), and 587–1084 (AAKE…GEEI). Residues 1073 to 1083 (EASSTHEKGEE) are compositionally biased toward basic and acidic residues. The segment at 1073-1221 (EASSTHEKGE…LLKKKSSSQK (149 aa)) is disordered. Residues 1084 to 1097 (ITNTNPFDNSTGEQ) show a composition bias toward polar residues. Composition is skewed to basic and acidic residues over residues 1106-1116 (AIDRHLKDDTT) and 1129-1160 (KGEK…TEHD). Residues 1175 to 1187 (NFDQLSNGLSLAE) are compositionally biased toward polar residues.

It belongs to the WEB family.

Its subcellular location is the plastid. It localises to the chloroplast. The chain is WEB family protein At4g27595, chloroplastic from Arabidopsis thaliana (Mouse-ear cress).